A 399-amino-acid polypeptide reads, in one-letter code: Lovastatin esterase (399 aa).

Catalysis depends on Ser-57, which acts as the Nucleophile. Residues Lys-60 and Tyr-170 each act as proton acceptor in the active site.

It belongs to the class-A beta-lactamase family.

The enzyme catalyses lovastatin + H2O = monacolin J + (S)-2-methylbutanoate + H(+). The catalysed reaction is pravastatin lactone + H2O = pravastatin diol lactone + (S)-2-methylbutanoate + H(+). It carries out the reaction mevastatin + H2O = compactin diol lactone + (S)-2-methylbutanoate + H(+). In terms of biological role, esterase that can hydrolyze the side chain of lovastatin to produce monacolin J. Is also able to hydrolyze the side chains of mevastatin and pravastatin, but not simvastatin. This is Lovastatin esterase from Penicillium rubens (strain ATCC 28089 / DSM 1075 / NRRL 1951 / Wisconsin 54-1255) (Penicillium chrysogenum).